We begin with the raw amino-acid sequence, 460 residues long: Serine/threonine-protein kinase UL13 (460 aa).

The interval 1-37 (MATRGRPGAKQVADHSVSDGGEQRRIPQKPPGPERCD) is disordered. Over residues 12-25 (VADHSVSDGGEQRR) the composition is skewed to basic and acidic residues. One can recognise a Protein kinase domain in the interval 95–460 (LEPYRFLGRG…DVRRTVSALA (366 aa)). Residues 101 to 109 (LGRGGYGSV) and Lys120 each bind ATP. Asp219 serves as the catalytic Proton acceptor.

This sequence belongs to the protein kinase superfamily. Ser/Thr protein kinase family. Post-translationally, autophosphorylated.

The protein localises to the virion tegument. The protein resides in the host nucleus. The catalysed reaction is L-seryl-[protein] + ATP = O-phospho-L-seryl-[protein] + ADP + H(+). It carries out the reaction L-threonyl-[protein] + ATP = O-phospho-L-threonyl-[protein] + ADP + H(+). In terms of biological role, multifunctional serine/threonine kinase that plays a role in several processes including egress of virus particles from the nucleus, modulation of the actin cytoskeleton and regulation of viral and cellular gene expression. Regulates the nuclear localization of viral envelopment factors UL34 and UL31 homologs, by phosphorylating the US3 kinase homolog, indicating a role in nuclear egress. Disrupts host nuclear lamins, including LMNA and LMNB1. Phosphorylates the viral Fc receptor composed of glycoproteins E (gE) and I (gI). Phosphorylation of glycoprotein E (gE) by UL13 homolog alters its subcellular localization, from the host early endosome to the plasma membrane. Participates in the transcriptional regulation of cellular and viral mRNAs mainly by phosphorylating the viral transcriptional regulator ICP22 homolog. The polypeptide is Serine/threonine-protein kinase UL13 (UL13) (Amazona oratrix (yellow-headed parrot)).